We begin with the raw amino-acid sequence, 454 residues long: MASVVLRNPSSKRLVPFSSQIYSRCGASVTSSYSISHSIGGDDLSSSTFGTSSFWRSMATFTRNKPHVNVGTIGHVDHGKTTLTAAITKVLAEEGKAKAIAFDEIDKAPEEKKRGITIATAHVEYETAKRHYAHVDCPGHADYVKNMITGAAQMDGGILVVSGPDGPMPQTKEHILLARQVGVPSLVCFLNKVDVVDDPELLELVEMELRELLSFYKFPGDDIPIIRGSALSALQGTNDEIGRQAILKLMDAVDEYIPDPVRVLDKPFLMPIEDVFSIQGRGTVATGRIEQGVIKVGEEVEILGLREGGVPLKSTVTGVEMFKKILDNGQAGDNVGLLLRGLKREDIQRGMVIAKPGSCKTYKKFEAEIYVLTKDEGGRHTAFFSNYRPQFYLRTADITGKVELPENVKMVMPGDNVTAVFELIMPVPLETGQRFALREGGRTVGAGVVSKVMT.

The transit peptide at 1-51 (MASVVLRNPSSKRLVPFSSQIYSRCGASVTSSYSISHSIGGDDLSSSTFGT) directs the protein to the mitochondrion. The tr-type G domain occupies 65–261 (KPHVNVGTIG…AVDEYIPDPV (197 aa)). Residues 74 to 81 (GHVDHGKT) are G1. Residue 74 to 81 (GHVDHGKT) participates in GTP binding. Thr82 is subject to Phosphothreonine. The G2 stretch occupies residues 115–119 (GITIA). The G3 stretch occupies residues 136-139 (DCPG). Residues 136–140 (DCPGH) and 191–194 (NKVD) each bind GTP. Residues 191–194 (NKVD) form a G4 region. Residues 229 to 231 (SAL) form a G5 region.

The protein belongs to the TRAFAC class translation factor GTPase superfamily. Classic translation factor GTPase family. EF-Tu/EF-1A subfamily.

It is found in the mitochondrion. Its function is as follows. This protein promotes the GTP-dependent binding of aminoacyl-tRNA to the A-site of ribosomes during protein biosynthesis. This Arabidopsis thaliana (Mouse-ear cress) protein is Elongation factor Tu, mitochondrial (TUFA).